The primary structure comprises 236 residues: Small ribosomal subunit protein uS3 (236 aa).

In terms of domain architecture, KH type-2 spans 39–107; that stretch reads VRQFLTKELK…PAQINISEVR (69 aa).

This sequence belongs to the universal ribosomal protein uS3 family. As to quaternary structure, part of the 30S ribosomal subunit. Forms a tight complex with proteins S10 and S14.

Binds the lower part of the 30S subunit head. Binds mRNA in the 70S ribosome, positioning it for translation. This is Small ribosomal subunit protein uS3 from Aeromonas salmonicida (strain A449).